We begin with the raw amino-acid sequence, 208 residues long: Heavy metal-associated isoprenylated plant protein 42 (208 aa).

The HMA domain occupies 6–70 (FPICILKMNL…AVAKLGQSPQ (65 aa)). Residues 93-116 (ATNKTQDKPSPPAPPVTATTPVET) form a disordered region. Cysteine 205 carries the cysteine methyl ester modification. Residue cysteine 205 is the site of S-farnesyl cysteine attachment. Residues 206–208 (SIM) constitute a propeptide, removed in mature form.

This sequence belongs to the HIPP family.

Probable heavy-metal-binding protein. This is Heavy metal-associated isoprenylated plant protein 42 from Arabidopsis thaliana (Mouse-ear cress).